We begin with the raw amino-acid sequence, 354 residues long: UPF0324 membrane protein BL1094 (354 aa).

Helical transmembrane passes span 12–33 (IATV…FASW), 43–65 (FGAL…SAYV), 86–108 (LLRL…TQGI), 112–129 (PIAA…YAIA), 138–160 (LAIL…LAGS), 175–197 (VTMA…IALG), 239–256 (LSRV…AIWW), 271–293 (VAFP…VPFV), 300–321 (LVDF…NVNF), and 331–353 (PMLA…AMLF).

Belongs to the UPF0324 family.

The protein resides in the cell membrane. In Bifidobacterium longum (strain NCC 2705), this protein is UPF0324 membrane protein BL1094.